We begin with the raw amino-acid sequence, 25 residues long: QEDIEAGKQKSATCTACHGQEGNST.

Residues 1 to 25 form a disordered region; that stretch reads QEDIEAGKQKSATCTACHGQEGNST. 2 residues coordinate heme: cysteine 14 and cysteine 17.

Binds 2 heme groups per subunit.

Its subcellular location is the periplasm. Functionally, diheme, high potential cytochrome c believed to be an intermediate electron donor to terminal oxidation systems. The polypeptide is Putative cytochrome c4 (Aliivibrio fischeri (Vibrio fischeri)).